The primary structure comprises 288 residues: Probable endonuclease 4 (288 aa).

The Zn(2+) site is built by His-75, His-115, Glu-153, Asp-187, His-190, His-224, Asp-237, His-239, and Glu-269.

The protein belongs to the AP endonuclease 2 family. Requires Zn(2+) as cofactor.

It catalyses the reaction Endonucleolytic cleavage to 5'-phosphooligonucleotide end-products.. In terms of biological role, endonuclease IV plays a role in DNA repair. It cleaves phosphodiester bonds at apurinic or apyrimidinic (AP) sites, generating a 3'-hydroxyl group and a 5'-terminal sugar phosphate. The polypeptide is Probable endonuclease 4 (Chlamydia trachomatis serovar L2 (strain ATCC VR-902B / DSM 19102 / 434/Bu)).